Consider the following 359-residue polypeptide: 5-amino-6-(D-ribitylamino)uracil--L-tyrosine 4-hydroxyphenyl transferase (359 aa).

The 238-residue stretch at 45 to 282 (VTYVLNANIN…VYAISRIFFK (238 aa)) folds into the Radical SAM core domain. [4Fe-4S] cluster contacts are provided by Cys-59, Cys-63, and Cys-66.

Belongs to the radical SAM superfamily. CofH family. As to quaternary structure, consists of two subunits, CofG and CofH. The cofactor is [4Fe-4S] cluster.

It catalyses the reaction 5-amino-6-(D-ribitylamino)uracil + L-tyrosine + S-adenosyl-L-methionine = 5-amino-5-(4-hydroxybenzyl)-6-(D-ribitylimino)-5,6-dihydrouracil + 2-iminoacetate + 5'-deoxyadenosine + L-methionine + H(+). The protein operates within cofactor biosynthesis; coenzyme F0 biosynthesis. Functionally, catalyzes the radical-mediated synthesis of 5-amino-5-(4-hydroxybenzyl)-6-(D-ribitylimino)-5,6-dihydrouracil from 5-amino-6-(D-ribitylamino)uracil and L-tyrosine. This Methanococcus vannielii (strain ATCC 35089 / DSM 1224 / JCM 13029 / OCM 148 / SB) protein is 5-amino-6-(D-ribitylamino)uracil--L-tyrosine 4-hydroxyphenyl transferase.